Here is a 125-residue protein sequence, read N- to C-terminus: Large ribosomal subunit protein bL17 (125 aa).

The protein belongs to the bacterial ribosomal protein bL17 family. Part of the 50S ribosomal subunit. Contacts protein L32.

This is Large ribosomal subunit protein bL17 from Marinomonas sp. (strain MWYL1).